Consider the following 887-residue polypeptide: Alanine--tRNA ligase (887 aa).

Residues histidine 573, histidine 577, cysteine 676, and histidine 680 each coordinate Zn(2+).

The protein belongs to the class-II aminoacyl-tRNA synthetase family. Zn(2+) serves as cofactor.

Its subcellular location is the cytoplasm. It carries out the reaction tRNA(Ala) + L-alanine + ATP = L-alanyl-tRNA(Ala) + AMP + diphosphate. In terms of biological role, catalyzes the attachment of alanine to tRNA(Ala) in a two-step reaction: alanine is first activated by ATP to form Ala-AMP and then transferred to the acceptor end of tRNA(Ala). Also edits incorrectly charged Ser-tRNA(Ala) and Gly-tRNA(Ala) via its editing domain. The chain is Alanine--tRNA ligase from Corynebacterium jeikeium (strain K411).